The chain runs to 166 residues: NAD(P)H-quinone oxidoreductase subunit I, chloroplastic (166 aa).

4Fe-4S ferredoxin-type domains lie at 55 to 84 (GRIH…VDWK) and 95 to 124 (LNYS…MTEE). [4Fe-4S] cluster contacts are provided by C64, C67, C70, C74, C104, C107, C110, and C114.

It belongs to the complex I 23 kDa subunit family. NDH is composed of at least 16 different subunits, 5 of which are encoded in the nucleus. Requires [4Fe-4S] cluster as cofactor.

The protein resides in the plastid. The protein localises to the chloroplast thylakoid membrane. It catalyses the reaction a plastoquinone + NADH + (n+1) H(+)(in) = a plastoquinol + NAD(+) + n H(+)(out). The catalysed reaction is a plastoquinone + NADPH + (n+1) H(+)(in) = a plastoquinol + NADP(+) + n H(+)(out). In terms of biological role, NDH shuttles electrons from NAD(P)H:plastoquinone, via FMN and iron-sulfur (Fe-S) centers, to quinones in the photosynthetic chain and possibly in a chloroplast respiratory chain. The immediate electron acceptor for the enzyme in this species is believed to be plastoquinone. Couples the redox reaction to proton translocation, and thus conserves the redox energy in a proton gradient. The chain is NAD(P)H-quinone oxidoreductase subunit I, chloroplastic from Rensonia salvadorica.